The following is a 352-amino-acid chain: C-C chemokine receptor type 5 (352 aa).

The Extracellular segment spans residues 1 to 30; the sequence is MDYQVSSPIYDINYYTSEPCQKINVKQIAA. Tyr3 carries the post-translational modification Sulfotyrosine. 2 O-linked (GalNAc...) serine glycosylation sites follow: Ser6 and Ser7. Sulfotyrosine occurs at positions 10, 14, and 15. Intrachain disulfides connect Cys20–Cys269 and Cys101–Cys178. A helical membrane pass occupies residues 31–58; sequence RLLPPLYSLVFIFGFVGNMLVILILINC. Residues 59-68 are Cytoplasmic-facing; it reads KRLKSMTDIY. Residues 69-89 form a helical membrane-spanning segment; it reads LLNLAISDLFFLLTVPFWAHY. At 90–102 the chain is on the extracellular side; the sequence is AAAQWDFGNTMCQ. Residues 103–124 form a helical membrane-spanning segment; it reads LLTGLYFIGFFSGIFFIILLTI. Residues 125-141 are Cytoplasmic-facing; the sequence is DRYLAVVHAVFALKART. A helical transmembrane segment spans residues 142-166; that stretch reads VTFGVVTSVITWVVAVFASLPGIIF. Residues 167 to 198 lie on the Extracellular side of the membrane; it reads TRSQKEGLHYTCSSHFPYSQYQFWKNFQTLKI. The chain crosses the membrane as a helical span at residues 199-218; the sequence is VILGLVLPLLVMVICYSGIL. The Cytoplasmic segment spans residues 219–235; it reads KTLLRCRNEKKRHRAVR. The chain crosses the membrane as a helical span at residues 236–260; the sequence is LIFTIMIVYFLFWAPYNIVLLLNTF. Residues 261-277 lie on the Extracellular side of the membrane; the sequence is QEFFGLNNCSSSNRLDQ. A helical membrane pass occupies residues 278 to 301; it reads AMQVTETLGMTHCCINPIIYAFVG. Residues 302–352 are Cytoplasmic-facing; it reads EKFRNYLLVFFQKHIAKRFCKCCSIFQQEAPERASSVYTRSTGEQEISVGL. 3 S-palmitoyl cysteine lipidation sites follow: Cys321, Cys323, and Cys324. A phosphoserine; by BARK1 mark is found at Ser336, Ser337, Ser342, and Ser349.

Belongs to the G-protein coupled receptor 1 family. Interacts with PRAF2. Efficient ligand binding to CCL3/MIP-1alpha and CCL4/MIP-1beta requires sulfation, O-glycosylation and sialic acid modifications. Glycosylation on Ser-6 is required for efficient binding of CCL4. Interacts with GRK2. Interacts with ARRB1 and ARRB2. Interacts with CNIH4. Interacts with S100A4; this interaction stimulates T-lymphocyte chemotaxis. As to quaternary structure, (Microbial infection) Interacts with HIV-1 surface protein gp120. In terms of assembly, (Microbial infection) May interact with human cytomegalovirus/HHV-5 protein UL78. Post-translationally, sulfated on at least 2 of the N-terminal tyrosines. Sulfation contributes to the efficiency of HIV-1 entry and is required for efficient binding of the chemokines, CCL3 and CCL4. O-glycosylated, but not N-glycosylated. Ser-6 appears to be the major site even if Ser-7 may be also O-glycosylated. Also sialylated glycans present which contribute to chemokine binding. Thr-16 and Ser-17 may also be glycosylated and, if so, with small moieties such as a T-antigen. In terms of processing, palmitoylation in the C-terminal is important for cell surface expression, and to a lesser extent, for HIV entry. Post-translationally, phosphorylation on serine residues in the C-terminal is stimulated by binding CC chemokines especially by APO-RANTES. As to expression, highly expressed in spleen, thymus, in the myeloid cell line THP-1, in the promyeloblastic cell line KG-1a and on CD4+ and CD8+ T-cells. Medium levels in peripheral blood leukocytes and in small intestine. Low levels in ovary and lung.

The protein resides in the cell membrane. In terms of biological role, receptor for a number of inflammatory CC-chemokines including CCL3/MIP-1-alpha, CCL4/MIP-1-beta and RANTES and subsequently transduces a signal by increasing the intracellular calcium ion level. May play a role in the control of granulocytic lineage proliferation or differentiation. Participates in T-lymphocyte migration to the infection site by acting as a chemotactic receptor. (Microbial infection) Acts as a coreceptor (CD4 being the primary receptor) of human immunodeficiency virus-1/HIV-1. The chain is C-C chemokine receptor type 5 from Homo sapiens (Human).